We begin with the raw amino-acid sequence, 263 residues long: Hydroxyethylthiazole kinase (263 aa).

Methionine 41 contacts substrate. ATP is bound by residues arginine 117 and serine 163. Substrate is bound at residue alanine 190.

It belongs to the Thz kinase family. Mg(2+) serves as cofactor.

The catalysed reaction is 5-(2-hydroxyethyl)-4-methylthiazole + ATP = 4-methyl-5-(2-phosphooxyethyl)-thiazole + ADP + H(+). The protein operates within cofactor biosynthesis; thiamine diphosphate biosynthesis; 4-methyl-5-(2-phosphoethyl)-thiazole from 5-(2-hydroxyethyl)-4-methylthiazole: step 1/1. Functionally, catalyzes the phosphorylation of the hydroxyl group of 4-methyl-5-beta-hydroxyethylthiazole (THZ). The protein is Hydroxyethylthiazole kinase of Haemophilus influenzae (strain PittEE).